The sequence spans 205 residues: Small ribosomal subunit protein uS4 (205 aa).

Residues 1–12 show a composition bias toward basic residues; that stretch reads MSKRVQAKHKLD. The disordered stretch occupies residues 1-49; sequence MSKRVQAKHKLDRRMGQNIWGRPKSPVNRREYGPGQHGQRRKGKMSDFG. One can recognise an S4 RNA-binding domain in the interval 94 to 155; the sequence is RRLDAVVYRS…ASRQLEIVVV (62 aa).

The protein belongs to the universal ribosomal protein uS4 family. In terms of assembly, part of the 30S ribosomal subunit. Contacts protein S5. The interaction surface between S4 and S5 is involved in control of translational fidelity.

Its function is as follows. One of the primary rRNA binding proteins, it binds directly to 16S rRNA where it nucleates assembly of the body of the 30S subunit. In terms of biological role, with S5 and S12 plays an important role in translational accuracy. In Methylorubrum extorquens (strain CM4 / NCIMB 13688) (Methylobacterium extorquens), this protein is Small ribosomal subunit protein uS4.